Consider the following 410-residue polypeptide: Metacaspase-1 (410 aa).

The segment at M1–S94 is disordered. Composition is skewed to low complexity over residues A21–P47 and N55–P64. A compositionally biased stretch (gly residues) spans Q65–G75. Polar residues predominate over residues M80–S94. Active-site residues include H200 and C256.

It belongs to the peptidase C14B family.

Its function is as follows. Involved in cell death (apoptosis). In Meyerozyma guilliermondii (strain ATCC 6260 / CBS 566 / DSM 6381 / JCM 1539 / NBRC 10279 / NRRL Y-324) (Yeast), this protein is Metacaspase-1 (MCA1).